The primary structure comprises 241 residues: Phosphatidylcholine synthase (241 aa).

Residues 1–15 (MKFFNYRRVPYAEIR) lie on the Cytoplasmic side of the membrane. Residues 16-36 (AFSVHILTASGSFLAFLGVVA) form a helical membrane-spanning segment. Residues 37–41 (AAEHR) lie on the Periplasmic side of the membrane. A helical membrane pass occupies residues 42-62 (FVDMFWWLGLALLVDGIDGPI). Residues 63 to 76 (ARKVQVKEVLPNWS) are Cytoplasmic-facing. A helical transmembrane segment spans residues 77–97 (GDTLDNVIDYVTYVLLPAFAL). Over 98-100 (YQS) the chain is Periplasmic. The chain crosses the membrane as a helical span at residues 101–121 (GMIGEPWSFVAAGAIVVSSAI). The Cytoplasmic portion of the chain corresponds to 122 to 133 (YYADMGMKTDEY). Residues 134-154 (FFSGFPVVWNMVVFTLFVIQA) form a helical membrane-spanning segment. Topologically, residues 155–156 (SE) are periplasmic. A helical transmembrane segment spans residues 157-177 (VTASIVVFLSVILTFLPINFL). Over 178-187 (HPVRVKRLRP) the chain is Cytoplasmic. A helical transmembrane segment spans residues 188–208 (LNLGIFLVWSVLGMYALLLHF). Over 209–211 (ETP) the chain is Periplasmic. A helical membrane pass occupies residues 212–232 (PWVVVGVVATGLYLYVIGFIL). Over 233-241 (QIFPKLGRA) the chain is Cytoplasmic.

It belongs to the CDP-alcohol phosphatidyltransferase class-I family. Requires Mn(2+) as cofactor.

It localises to the cell inner membrane. The enzyme catalyses a CDP-1,2-diacyl-sn-glycerol + choline = a 1,2-diacyl-sn-glycero-3-phosphocholine + CMP + H(+). Activated by CDP-diacylglycerol especially in the presence of Triton X-100 (0.1% w/v) at concentrations where micelles are formed. Maximal activation by Triton X-100 at 0.2% w/v, but higher concentrations become inhibitory. Inhibited by EDTA and high concentrations of choline. Its function is as follows. Condenses choline with CDP-diglyceride to produce phosphatidylcholine and CMP. The protein is Phosphatidylcholine synthase (pcs) of Rhizobium meliloti (strain 1021) (Ensifer meliloti).